Here is a 205-residue protein sequence, read N- to C-terminus: N-(5'-phosphoribosyl)anthranilate isomerase (205 aa).

This sequence belongs to the TrpF family.

It carries out the reaction N-(5-phospho-beta-D-ribosyl)anthranilate = 1-(2-carboxyphenylamino)-1-deoxy-D-ribulose 5-phosphate. Its pathway is amino-acid biosynthesis; L-tryptophan biosynthesis; L-tryptophan from chorismate: step 3/5. The polypeptide is N-(5'-phosphoribosyl)anthranilate isomerase (Acidiphilium cryptum (strain JF-5)).